The primary structure comprises 269 residues: UPF0524 protein C3orf70 homolog A (269 aa).

2 disordered regions span residues 139 to 203 (VQRP…DSGI) and 215 to 249 (DEDS…QDEC). Over residues 141 to 150 (RPPPPTPNPT) the composition is skewed to pro residues. Low complexity predominate over residues 151-164 (HQPQTAAPQPVPQR). The segment covering 179-191 (QAKEKISAPKMDH) has biased composition (basic and acidic residues). A compositionally biased stretch (acidic residues) spans 215 to 233 (DEDSCVDDDDEEEEDDELS).

This sequence belongs to the UPF0524 family.

Its function is as follows. Plays a role in neuronal and neurobehavioral development. Required for normal expression of neuronal markers elavl3 and eno2 and neurobehaviors related to circadian rhythm and changes in light-dark conditions. This chain is UPF0524 protein C3orf70 homolog A, found in Danio rerio (Zebrafish).